The chain runs to 176 residues: Interleukin-7 (176 aa).

The first 25 residues, 1 to 25 (MFHVSFRYIFGIPPLILVLLPVASS), serve as a signal peptide directing secretion. 3 disulfide bridges follow: Cys-27–Cys-165, Cys-58–Cys-153, and Cys-71–Cys-116. 3 N-linked (GlcNAc...) asparagine glycosylation sites follow: Asn-94, Asn-115, and Asn-140. Positions 118-143 (SKGKGRKPPSLSEAQPTKNLEENKSS) are disordered.

It belongs to the IL-7/IL-9 family. As to quaternary structure, interacts with IL7R and CSF2RG.

Its subcellular location is the secreted. Functionally, hematopoietic cytokine that plays an essential role in the development, expansion, and survival of naive and memory T-cells and B-cells thereby regulating the number of mature lymphocytes and maintaining lymphoid homeostasis. Mechanistically, exerts its biological effects through a receptor composed of IL7RA subunit and the cytokine receptor common subunit gamma/CSF2RG. Binding to the receptor leads to activation of various kinases including JAK1 or JAK3 depending on the cell type and subsequently propagation of signals through activation of several downstream signaling pathways including the PI3K/Akt/mTOR or the JAK-STAT5. The chain is Interleukin-7 (IL7) from Bos taurus (Bovine).